Consider the following 159-residue polypeptide: 2-C-methyl-D-erythritol 2,4-cyclodiphosphate synthase (159 aa).

A divalent metal cation is bound by residues aspartate 8 and histidine 10. Residues 8-10 (DVH) and 34-35 (HS) contribute to the 4-CDP-2-C-methyl-D-erythritol 2-phosphate site. Histidine 42 contacts a divalent metal cation. 4-CDP-2-C-methyl-D-erythritol 2-phosphate-binding positions include 56–58 (DIG), 61–65 (FPDTD), 132–135 (TTTE), phenylalanine 139, and arginine 142.

This sequence belongs to the IspF family. As to quaternary structure, homotrimer. A divalent metal cation serves as cofactor.

The catalysed reaction is 4-CDP-2-C-methyl-D-erythritol 2-phosphate = 2-C-methyl-D-erythritol 2,4-cyclic diphosphate + CMP. The protein operates within isoprenoid biosynthesis; isopentenyl diphosphate biosynthesis via DXP pathway; isopentenyl diphosphate from 1-deoxy-D-xylulose 5-phosphate: step 4/6. Its function is as follows. Involved in the biosynthesis of isopentenyl diphosphate (IPP) and dimethylallyl diphosphate (DMAPP), two major building blocks of isoprenoid compounds. Catalyzes the conversion of 4-diphosphocytidyl-2-C-methyl-D-erythritol 2-phosphate (CDP-ME2P) to 2-C-methyl-D-erythritol 2,4-cyclodiphosphate (ME-CPP) with a corresponding release of cytidine 5-monophosphate (CMP). The protein is 2-C-methyl-D-erythritol 2,4-cyclodiphosphate synthase of Finegoldia magna (strain ATCC 29328 / DSM 20472 / WAL 2508) (Peptostreptococcus magnus).